Here is a 432-residue protein sequence, read N- to C-terminus: Serine--tRNA ligase (432 aa).

236–238 (TSE) serves as a coordination point for L-serine. 267–269 (RSE) provides a ligand contact to ATP. Glutamate 290 serves as a coordination point for L-serine. 354–357 (EISS) lines the ATP pocket. Serine 390 is a binding site for L-serine.

Belongs to the class-II aminoacyl-tRNA synthetase family. Type-1 seryl-tRNA synthetase subfamily. Homodimer. The tRNA molecule binds across the dimer.

It is found in the cytoplasm. The catalysed reaction is tRNA(Ser) + L-serine + ATP = L-seryl-tRNA(Ser) + AMP + diphosphate + H(+). It catalyses the reaction tRNA(Sec) + L-serine + ATP = L-seryl-tRNA(Sec) + AMP + diphosphate + H(+). It functions in the pathway aminoacyl-tRNA biosynthesis; selenocysteinyl-tRNA(Sec) biosynthesis; L-seryl-tRNA(Sec) from L-serine and tRNA(Sec): step 1/1. In terms of biological role, catalyzes the attachment of serine to tRNA(Ser). Is also able to aminoacylate tRNA(Sec) with serine, to form the misacylated tRNA L-seryl-tRNA(Sec), which will be further converted into selenocysteinyl-tRNA(Sec). The protein is Serine--tRNA ligase of Pseudoalteromonas atlantica (strain T6c / ATCC BAA-1087).